The primary structure comprises 629 residues: uncharacterized protein (629 aa).

An ABC transporter 1 domain is found at leucine 4–glutamate 255. Glycine 36–serine 43 serves as a coordination point for ATP. The interval lysine 284–serine 304 is disordered. A compositionally biased stretch (basic and acidic residues) spans alanine 285 to lysine 294. Polar residues predominate over residues glutamate 295 to serine 304. An ABC transporter 2 domain is found at isoleucine 319–proline 537. Glycine 351–threonine 358 contacts ATP. Residues serine 530–lysine 555 are disordered. Basic and acidic residues predominate over residues alanine 540 to proline 550. Positions lysine 560–serine 629 form a coiled coil.

This sequence belongs to the ABC transporter superfamily.

This is an uncharacterized protein from Bacillus subtilis (strain 168).